The chain runs to 176 residues: ATP-dependent protease subunit HslV (176 aa).

Thr-6 is a catalytic residue. Na(+) is bound by residues Gly-161, Cys-164, and Thr-167.

Belongs to the peptidase T1B family. HslV subfamily. In terms of assembly, a double ring-shaped homohexamer of HslV is capped on each side by a ring-shaped HslU homohexamer. The assembly of the HslU/HslV complex is dependent on binding of ATP.

Its subcellular location is the cytoplasm. The enzyme catalyses ATP-dependent cleavage of peptide bonds with broad specificity.. With respect to regulation, allosterically activated by HslU binding. Its function is as follows. Protease subunit of a proteasome-like degradation complex believed to be a general protein degrading machinery. The sequence is that of ATP-dependent protease subunit HslV from Thermotoga sp. (strain RQ2).